The primary structure comprises 234 residues: Thymidylate kinase (234 aa).

An ATP-binding site is contributed by 20–27 (GIDASGKT).

The protein belongs to the thymidylate kinase family.

It carries out the reaction dTMP + ATP = dTDP + ADP. Functionally, phosphorylation of dTMP to form dTDP in both de novo and salvage pathways of dTTP synthesis. In Mycoplasmopsis pulmonis (strain UAB CTIP) (Mycoplasma pulmonis), this protein is Thymidylate kinase.